A 364-amino-acid polypeptide reads, in one-letter code: UDP-N-acetylglucosamine--N-acetylmuramyl-(pentapeptide) pyrophosphoryl-undecaprenol N-acetylglucosamine transferase (364 aa).

UDP-N-acetyl-alpha-D-glucosamine-binding positions include 10-12 (TGG), Asn124, Ser195, and Gln295.

The protein belongs to the glycosyltransferase 28 family. MurG subfamily.

The protein localises to the cell membrane. It catalyses the reaction di-trans,octa-cis-undecaprenyl diphospho-N-acetyl-alpha-D-muramoyl-L-alanyl-D-glutamyl-meso-2,6-diaminopimeloyl-D-alanyl-D-alanine + UDP-N-acetyl-alpha-D-glucosamine = di-trans,octa-cis-undecaprenyl diphospho-[N-acetyl-alpha-D-glucosaminyl-(1-&gt;4)]-N-acetyl-alpha-D-muramoyl-L-alanyl-D-glutamyl-meso-2,6-diaminopimeloyl-D-alanyl-D-alanine + UDP + H(+). It functions in the pathway cell wall biogenesis; peptidoglycan biosynthesis. Its function is as follows. Cell wall formation. Catalyzes the transfer of a GlcNAc subunit on undecaprenyl-pyrophosphoryl-MurNAc-pentapeptide (lipid intermediate I) to form undecaprenyl-pyrophosphoryl-MurNAc-(pentapeptide)GlcNAc (lipid intermediate II). The polypeptide is UDP-N-acetylglucosamine--N-acetylmuramyl-(pentapeptide) pyrophosphoryl-undecaprenol N-acetylglucosamine transferase (Bacillus pumilus (strain SAFR-032)).